A 203-amino-acid polypeptide reads, in one-letter code: Peptidyl-tRNA hydrolase (203 aa).

A tRNA-binding site is contributed by Y26. The active-site Proton acceptor is H31. Positions 82, 84, and 130 each coordinate tRNA.

Belongs to the PTH family. In terms of assembly, monomer.

The protein resides in the cytoplasm. The enzyme catalyses an N-acyl-L-alpha-aminoacyl-tRNA + H2O = an N-acyl-L-amino acid + a tRNA + H(+). In terms of biological role, hydrolyzes ribosome-free peptidyl-tRNAs (with 1 or more amino acids incorporated), which drop off the ribosome during protein synthesis, or as a result of ribosome stalling. Functionally, catalyzes the release of premature peptidyl moieties from peptidyl-tRNA molecules trapped in stalled 50S ribosomal subunits, and thus maintains levels of free tRNAs and 50S ribosomes. The chain is Peptidyl-tRNA hydrolase from Streptomyces avermitilis (strain ATCC 31267 / DSM 46492 / JCM 5070 / NBRC 14893 / NCIMB 12804 / NRRL 8165 / MA-4680).